A 135-amino-acid chain; its full sequence is FK506-binding protein 2 (135 aa).

The signal sequence occupies residues 1 to 17; the sequence is MLLKSLFLLFLTAIAFA. The PPIase FKBP-type domain occupies 40–127; it reads GDLISVHYEG…VFVAELVDIA (88 aa). Residues 132–135 carry the Prevents secretion from ER motif; sequence HDEL.

The protein belongs to the FKBP-type PPIase family. FKBP2 subfamily.

Its subcellular location is the endoplasmic reticulum. It carries out the reaction [protein]-peptidylproline (omega=180) = [protein]-peptidylproline (omega=0). With respect to regulation, inhibited by both FK506 and rapamycin. Functionally, PPIases accelerate the folding of proteins. It catalyzes the cis-trans isomerization of proline imidic peptide bonds in oligopeptides. This is FK506-binding protein 2 (FPR2) from Debaryomyces hansenii (strain ATCC 36239 / CBS 767 / BCRC 21394 / JCM 1990 / NBRC 0083 / IGC 2968) (Yeast).